The sequence spans 223 residues: Dephospho-CoA kinase (223 aa).

The DPCK domain occupies 22-223; sequence LIGLSGPSCS…LLQEVKKRGF (202 aa). 30-35 provides a ligand contact to ATP; that stretch reads CSGKNT.

The protein belongs to the CoaE family.

The protein resides in the cytoplasm. It carries out the reaction 3'-dephospho-CoA + ATP = ADP + CoA + H(+). It functions in the pathway cofactor biosynthesis; coenzyme A biosynthesis; CoA from (R)-pantothenate: step 5/5. Its function is as follows. Catalyzes the phosphorylation of the 3'-hydroxyl group of dephosphocoenzyme A to form coenzyme A. This is Dephospho-CoA kinase from Treponema denticola (strain ATCC 35405 / DSM 14222 / CIP 103919 / JCM 8153 / KCTC 15104).